The primary structure comprises 204 residues: dTTP/UTP pyrophosphatase (204 aa).

The active-site Proton acceptor is the Asp-68.

Belongs to the Maf family. YhdE subfamily. A divalent metal cation is required as a cofactor.

The protein resides in the cytoplasm. It catalyses the reaction dTTP + H2O = dTMP + diphosphate + H(+). The enzyme catalyses UTP + H2O = UMP + diphosphate + H(+). Its function is as follows. Nucleoside triphosphate pyrophosphatase that hydrolyzes dTTP and UTP. May have a dual role in cell division arrest and in preventing the incorporation of modified nucleotides into cellular nucleic acids. The sequence is that of dTTP/UTP pyrophosphatase from Thermotoga maritima (strain ATCC 43589 / DSM 3109 / JCM 10099 / NBRC 100826 / MSB8).